The chain runs to 376 residues: Chaperone protein DnaJ (376 aa).

Residues 5 to 70 (DYYEVLGVGR…DKKAAYDQFG (66 aa)) form the J domain. The CR-type zinc finger occupies 132 to 210 (GLTKELRIPT…CHGEGRVEKS (79 aa)). Zn(2+) is bound by residues C145, C148, C162, C165, C184, C187, C198, and C201. 4 CXXCXGXG motif repeats span residues 145-152 (CDSCDGSG), 162-169 (CGTCHGQG), 184-191 (CPTCHGRG), and 198-205 (CNKCHGEG).

It belongs to the DnaJ family. As to quaternary structure, homodimer. Zn(2+) serves as cofactor.

The protein localises to the cytoplasm. Participates actively in the response to hyperosmotic and heat shock by preventing the aggregation of stress-denatured proteins and by disaggregating proteins, also in an autonomous, DnaK-independent fashion. Unfolded proteins bind initially to DnaJ; upon interaction with the DnaJ-bound protein, DnaK hydrolyzes its bound ATP, resulting in the formation of a stable complex. GrpE releases ADP from DnaK; ATP binding to DnaK triggers the release of the substrate protein, thus completing the reaction cycle. Several rounds of ATP-dependent interactions between DnaJ, DnaK and GrpE are required for fully efficient folding. Also involved, together with DnaK and GrpE, in the DNA replication of plasmids through activation of initiation proteins. This is Chaperone protein DnaJ from Shewanella pealeana (strain ATCC 700345 / ANG-SQ1).